Consider the following 232-residue polypeptide: V-type ATP synthase subunit E (232 aa).

The protein belongs to the V-ATPase E subunit family.

Functionally, produces ATP from ADP in the presence of a proton gradient across the membrane. The chain is V-type ATP synthase subunit E (atpE) from Treponema pallidum (strain Nichols).